Consider the following 278-residue polypeptide: C-type lectin domain family 1 member A (278 aa).

The segment at M1–R42 is disordered. The Cytoplasmic segment spans residues M1–L52. Positions T18 to R32 are enriched in polar residues. A helical; Signal-anchor for type II membrane protein transmembrane segment spans residues I53–F73. Over Q74–R278 the chain is Extracellular. N-linked (GlcNAc...) asparagine glycans are attached at residues N95 and N169. In terms of domain architecture, C-type lectin spans H144–E258. 2 cysteine pairs are disulfide-bonded: C165-C257 and C236-C249.

It localises to the membrane. The polypeptide is C-type lectin domain family 1 member A (CLEC1A) (Bos taurus (Bovine)).